The sequence spans 435 residues: Cyclin-dependent kinase 14 (435 aa).

The span at R75–S92 shows a compositional bias: polar residues. Residues R75–K97 form a disordered region. In terms of domain architecture, Protein kinase spans Y101–F385. ATP contacts are provided by residues L107–V115 and K130. The Proton acceptor role is filled by D222.

It belongs to the protein kinase superfamily. CMGC Ser/Thr protein kinase family. CDC2/CDKX subfamily. In terms of assembly, interacts with ccny; ccny mediates its recruitment to the plasma membrane and promotes phosphorylation of lrp6.

The protein localises to the cell membrane. It carries out the reaction L-seryl-[protein] + ATP = O-phospho-L-seryl-[protein] + ADP + H(+). The enzyme catalyses L-threonyl-[protein] + ATP = O-phospho-L-threonyl-[protein] + ADP + H(+). Its function is as follows. Serine/threonine-protein kinase involved in the control of the eukaryotic cell cycle, whose activity is controlled by an associated cyclin. Acts as a cell-cycle regulator of Wnt signaling pathway during G2/M phase by mediating the phosphorylation of lrp6, leading to the activation of the Wnt signaling pathway. The polypeptide is Cyclin-dependent kinase 14 (cdk14) (Xenopus laevis (African clawed frog)).